Consider the following 209-residue polypeptide: Endoplasmic reticulum vesicle protein 25 (209 aa).

An N-terminal signal peptide occupies residues 1 to 18 (MKYTTFGIISLFLSVTWA). Topologically, residues 19–178 (LRFELAASFE…TNESTNRRVR (160 aa)) are lumenal. The GOLD domain maps to 31–119 (PFCIRDFVEA…MRNVEVNIES (89 aa)). Residues 179 to 199 (NFSMAVIVVFAALCAWQLNYL) traverse the membrane as a helical segment. The Cytoplasmic portion of the chain corresponds to 200–209 (KNYFRAKHII).

The protein belongs to the EMP24/GP25L family.

It localises to the endoplasmic reticulum membrane. The protein localises to the golgi apparatus membrane. In terms of biological role, constituent of COPII-coated endoplasmic reticulum-derived transport vesicles. Required for efficient transport of a subset of secretory proteins to the Golgi. Facilitates retrograde transport from the Golgi to the endoplasmic reticulum. The polypeptide is Endoplasmic reticulum vesicle protein 25 (ERV25) (Eremothecium gossypii (strain ATCC 10895 / CBS 109.51 / FGSC 9923 / NRRL Y-1056) (Yeast)).